A 437-amino-acid polypeptide reads, in one-letter code: Aminopeptidase W (437 aa).

Residues Cys70, His361, and Asn382 contribute to the active site.

It belongs to the peptidase C1 family.

Its subcellular location is the cytoplasm. In Lactobacillus delbrueckii subsp. lactis, this protein is Aminopeptidase W (pepW).